Consider the following 793-residue polypeptide: Acetyl-CoA decarbonylase/synthase complex subunit alpha (793 aa).

[4Fe-4S] cluster is bound by residues Cys-55, Cys-58, Cys-63, and Cys-73. CO is bound at residue His-96. [Ni-4Fe-4S] cluster-binding residues include His-229, Cys-257, and Cys-309. 4Fe-4S ferredoxin-type domains follow at residues 393–422 (EQQF…ISEM) and 432–461 (EPFS…LKLY). Residues Cys-403, Cys-406, Cys-409, Cys-413, Cys-441, Cys-444, Cys-447, and Cys-451 each coordinate [4Fe-4S] cluster. Cys-509, Cys-538, and Cys-573 together coordinate [Ni-4Fe-4S] cluster.

Belongs to the Ni-containing carbon monoxide dehydrogenase family. As to quaternary structure, heterotetramer of two alpha and two epsilon subunits. The ACDS complex is made up of alpha, epsilon, beta, gamma and delta subunits with a probable stoichiometry of (alpha(2)epsilon(2))(4)-beta(8)-(gamma(1)delta(1))(8). [4Fe-4S] cluster serves as cofactor. [Ni-4Fe-4S] cluster is required as a cofactor.

The enzyme catalyses CO + 2 oxidized [2Fe-2S]-[ferredoxin] + H2O = 2 reduced [2Fe-2S]-[ferredoxin] + CO2 + 2 H(+). Part of the ACDS complex that catalyzes the reversible cleavage of acetyl-CoA, allowing autotrophic growth from CO(2). The alpha-epsilon subcomponent functions as a carbon monoxide dehydrogenase. The chain is Acetyl-CoA decarbonylase/synthase complex subunit alpha from Methanothrix soehngenii (Methanosaeta concilii).